Reading from the N-terminus, the 314-residue chain is Mitochondrial thiamine pyrophosphate carrier 1 (314 aa).

Transmembrane regions (helical) follow at residues 14–30 (VAAWKTLLAGAVSGLLA), 84–100 (LLYVTYGSAQFSSYSLF), 116–136 (LVVGAFAGITSSIVSYPFDVL), 170–186 (GSIASMTTITLTASIMF), 217–233 (SAGTIGGVIAKIITFPL), and 285–302 (GILVALSKTIPTTFVSFW). 3 Solcar repeats span residues 14–103 (VAAW…FNRY), 110–195 (EARL…IRIY), and 210–310 (ELAT…AIHY).

The protein belongs to the mitochondrial carrier (TC 2.A.29) family.

It localises to the mitochondrion inner membrane. Mitochondrial transporter that mediates uptake of thiamine pyrophosphate (ThPP) into mitochondria. The polypeptide is Mitochondrial thiamine pyrophosphate carrier 1 (TPC1) (Saccharomyces cerevisiae (strain ATCC 204508 / S288c) (Baker's yeast)).